The chain runs to 165 residues: Cyclic pyranopterin monophosphate synthase (165 aa).

Residues 83 to 85 (FCH) and 120 to 121 (ME) contribute to the substrate site. Residue Asp-135 is part of the active site.

It belongs to the MoaC family. In terms of assembly, homohexamer; trimer of dimers.

The enzyme catalyses (8S)-3',8-cyclo-7,8-dihydroguanosine 5'-triphosphate = cyclic pyranopterin phosphate + diphosphate. The protein operates within cofactor biosynthesis; molybdopterin biosynthesis. Catalyzes the conversion of (8S)-3',8-cyclo-7,8-dihydroguanosine 5'-triphosphate to cyclic pyranopterin monophosphate (cPMP). The polypeptide is Cyclic pyranopterin monophosphate synthase (Xanthomonas axonopodis pv. citri (strain 306)).